Here is a 489-residue protein sequence, read N- to C-terminus: Coronin-1B (489 aa).

Phosphoserine is present on S2. 5 WD repeats span residues 80–120 (GHTG…LTSP), 130–170 (GHTK…ELYR), 174–213 (LHPD…LVAE), 217–260 (AHEG…EPMA), and 265–305 (DSSN…PYIH). The disordered stretch occupies residues 414 to 443 (DSRPAMAPGSSRLGAPASTTAAADATPSGS). Positions 427–443 (GAPASTTAAADATPSGS) are enriched in low complexity. Residues 449–474 (EAGKLEEVMQELRALRALVKEQGERI) are a coiled coil.

The protein belongs to the WD repeat coronin family. As to quaternary structure, forms homooligomers, but does not form complexes with the other coronins. Interacts with Arp2/3 complex components, including ACTR2, ARPC1B and ARPC2. Binds actin. Post-translationally, phosphorylation on Ser-2 regulates the interaction with the Arp2/3 complex and cell motility in fibroblasts. Phosphorylation does not seem to affect subcellular location.

It is found in the cytoplasm. The protein localises to the cytoskeleton. Its subcellular location is the stress fiber. Its function is as follows. Regulates leading edge dynamics and cell motility in fibroblasts. May be involved in cytokinesis and signal transduction. The protein is Coronin-1B (CORO1B) of Pongo abelii (Sumatran orangutan).